The chain runs to 629 residues: Serine/threonine-protein kinase ICK (629 aa).

In terms of domain architecture, Protein kinase spans 4-284 (YTTIKQLGDG…ASQALRYPYF (281 aa)). ATP is bound by residues 10-18 (LGDGTYGSV) and K33. D125 (proton acceptor) is an active-site residue. T157 is modified (phosphothreonine). Position 159 is a phosphotyrosine (Y159). S161 is subject to Phosphoserine. Disordered stretches follow at residues 292–322 (ISTQ…PAQA), 454–482 (PSEP…QSTA), and 579–629 (GYSS…PSRR). The span at 309-321 (GPPPYVKPAPPAQ) shows a compositional bias: pro residues. The segment covering 460-482 (TGTSVSTQASSQRRDTPTLQSTA) has biased composition (polar residues).

The protein belongs to the protein kinase superfamily. CMGC Ser/Thr protein kinase family. CDC2/CDKX subfamily. It depends on Mg(2+) as a cofactor. Autophosphorylated on serine and threonine residues. Phosphorylation at Thr-157 increases kinase activity. Expressed in embryonic heart from day 11. Highly expressed in the uterus and at lower levels in brain, heart, lung, kidney, skeletal muscle, ovary and liver in adult tissues.

The protein localises to the cytoplasm. Its subcellular location is the cell projection. The protein resides in the cilium. It is found in the nucleus. It localises to the cytoskeleton. The protein localises to the cilium basal body. It carries out the reaction L-seryl-[protein] + ATP = O-phospho-L-seryl-[protein] + ADP + H(+). The enzyme catalyses L-threonyl-[protein] + ATP = O-phospho-L-threonyl-[protein] + ADP + H(+). Required for ciliogenesis, particularly in neuronal and retinal progenitor cells. Phosphorylates KIF3A. Involved in the control of ciliary length. Regulates the ciliary localization of SHH pathway components as well as the localization of IFT components at ciliary tips. May play a role in cardiac development. Regulates intraflagellar transport (IFT) speed and negatively regulates cilium length in a cAMP and mTORC1 signaling-dependent manner and this regulation requires its kinase activity. This chain is Serine/threonine-protein kinase ICK (Cilk1), found in Rattus norvegicus (Rat).